The primary structure comprises 438 residues: Proline--tRNA ligase (438 aa).

It belongs to the class-II aminoacyl-tRNA synthetase family. ProS type 2 subfamily. As to quaternary structure, homodimer.

Its subcellular location is the cytoplasm. It carries out the reaction tRNA(Pro) + L-proline + ATP = L-prolyl-tRNA(Pro) + AMP + diphosphate. Functionally, catalyzes the attachment of proline to tRNA(Pro) in a two-step reaction: proline is first activated by ATP to form Pro-AMP and then transferred to the acceptor end of tRNA(Pro). The sequence is that of Proline--tRNA ligase from Rickettsia canadensis (strain McKiel).